A 370-amino-acid chain; its full sequence is Queuine tRNA-ribosyltransferase (370 aa).

Asp-89 serves as the catalytic Proton acceptor. Substrate is bound by residues 89–93 (DSGGF), Asp-143, Gln-185, and Gly-212. An RNA binding region spans residues 243–249 (GVGKPED). The active-site Nucleophile is the Asp-262. Positions 267-271 (TRNAR) are RNA binding; important for wobble base 34 recognition. Zn(2+)-binding residues include Cys-300, Cys-302, Cys-305, and His-331.

Belongs to the queuine tRNA-ribosyltransferase family. In terms of assembly, homodimer. Within each dimer, one monomer is responsible for RNA recognition and catalysis, while the other monomer binds to the replacement base PreQ1. It depends on Zn(2+) as a cofactor.

The catalysed reaction is 7-aminomethyl-7-carbaguanine + guanosine(34) in tRNA = 7-aminomethyl-7-carbaguanosine(34) in tRNA + guanine. It functions in the pathway tRNA modification; tRNA-queuosine biosynthesis. Its function is as follows. Catalyzes the base-exchange of a guanine (G) residue with the queuine precursor 7-aminomethyl-7-deazaguanine (PreQ1) at position 34 (anticodon wobble position) in tRNAs with GU(N) anticodons (tRNA-Asp, -Asn, -His and -Tyr). Catalysis occurs through a double-displacement mechanism. The nucleophile active site attacks the C1' of nucleotide 34 to detach the guanine base from the RNA, forming a covalent enzyme-RNA intermediate. The proton acceptor active site deprotonates the incoming PreQ1, allowing a nucleophilic attack on the C1' of the ribose to form the product. After dissociation, two additional enzymatic reactions on the tRNA convert PreQ1 to queuine (Q), resulting in the hypermodified nucleoside queuosine (7-(((4,5-cis-dihydroxy-2-cyclopenten-1-yl)amino)methyl)-7-deazaguanosine). This is Queuine tRNA-ribosyltransferase from Pseudoalteromonas atlantica (strain T6c / ATCC BAA-1087).